A 411-amino-acid chain; its full sequence is D-ribitol-5-phosphate cytidylyltransferase (411 aa).

Belongs to the IspD/TarI cytidylyltransferase family. IspD subfamily. In terms of assembly, homodimer.

Its subcellular location is the cytoplasm. It localises to the cytosol. It catalyses the reaction D-ribitol 5-phosphate + CTP + H(+) = CDP-L-ribitol + diphosphate. The catalysed reaction is D-ribose 5-phosphate + CTP + H(+) = CDP-D-ribose + diphosphate. It carries out the reaction D-ribulose 5-phosphate + CTP + H(+) = CDP-D-ribulose + diphosphate. It participates in protein modification; protein glycosylation. Its function is as follows. Cytidylyltransferase required for protein O-linked mannosylation. Catalyzes the formation of CDP-ribitol nucleotide sugar from D-ribitol 5-phosphate. CDP-ribitol is a substrate of FKTN during the biosynthesis of the phosphorylated O-mannosyl trisaccharide (N-acetylgalactosamine-beta-3-N-acetylglucosamine-beta-4-(phosphate-6-)mannose), a carbohydrate structure present in alpha-dystroglycan (DAG1), which is required for binding laminin G-like domain-containing extracellular proteins with high affinity. Shows activity toward other pentose phosphate sugars and mediates formation of CDP-ribulose or CDP-ribose using CTP and ribulose-5-phosphate or ribose-5-phosphate, respectively. Not involved in dolichol production. The chain is D-ribitol-5-phosphate cytidylyltransferase (crppa) from Xenopus tropicalis (Western clawed frog).